We begin with the raw amino-acid sequence, 144 residues long: Small ribosomal subunit protein bS16 (144 aa).

The tract at residues 115–144 (NEPVAEAVTPKKKAKKDDAAAESTEAEAAE) is disordered.

This sequence belongs to the bacterial ribosomal protein bS16 family.

In Nocardia farcinica (strain IFM 10152), this protein is Small ribosomal subunit protein bS16.